The chain runs to 127 residues: Urotensin-2 (127 aa).

An N-terminal signal peptide occupies residues 1–16; that stretch reads MSKLFFCCLILAGSFC. Positions 17-111 are excised as a propeptide; it reads SFRSLPIIVP…RLQSKDRKQF (95 aa). A disulfide bridge links C121 with C126.

The protein belongs to the urotensin-2 family. As to expression, central nervous system. Spinal cord.

It localises to the secreted. In terms of biological role, involved in smooth muscle stimulating and ion mobilizing activities. It has a suggested role as a corticotropin-releasing factor. This chain is Urotensin-2 (UTS2), found in Pelophylax ridibundus (Marsh frog).